Here is a 102-residue protein sequence, read N- to C-terminus: Glutaredoxin (102 aa).

In terms of domain architecture, Glutaredoxin spans M3 to V102. C23 and C26 form a disulfide bridge.

It belongs to the glutaredoxin family. CPYC subfamily.

Its subcellular location is the cytoplasm. Its function is as follows. Has a glutathione-disulfide oxidoreductase activity in the presence of NADPH and glutathione reductase. Reduces low molecular weight disulfides and proteins. The polypeptide is Glutaredoxin (Ricinus communis (Castor bean)).